A 473-amino-acid polypeptide reads, in one-letter code: Tubulin gamma chain (473 aa).

The tract at residues 33 to 56 (TDGLSQLPDSSTERDDDTKPFFRE) is disordered. Positions 43–56 (STERDDDTKPFFRE) are enriched in basic and acidic residues. 143–149 (AGGTGSG) is a GTP binding site.

It belongs to the tubulin family. As to quaternary structure, interacts with SPC72, SPC97 and SPC98.

Its subcellular location is the cytoplasm. It localises to the cytoskeleton. The protein localises to the microtubule organizing center. The protein resides in the spindle pole body. Functionally, tubulin is the major constituent of microtubules. The gamma chain is found at microtubule organizing centers (MTOC) such as the spindle poles or the centrosome, suggesting that it is involved in the minus-end nucleation of microtubule assembly. TUB4 is an important spindle pole body component that organizes both cytoplasmic and nuclear microtubule arrays. The sequence is that of Tubulin gamma chain (TUB4) from Saccharomyces cerevisiae (strain ATCC 204508 / S288c) (Baker's yeast).